The following is a 109-amino-acid chain: Peptide chaperone MftB (109 aa).

Belongs to the peptide chaperone MftB family.

Peptide chaperone involved in the biosynthesis of the enzyme cofactor mycofactocin (MFT). Binds MftA and MftC with high affinity, and is essential for MftC activity on MftA, likely via the formation of a ternary complex. The protein is Peptide chaperone MftB of Mycobacterium tuberculosis (strain ATCC 25618 / H37Rv).